The primary structure comprises 387 residues: tRNA pseudouridine synthase B (387 aa).

Catalysis depends on Asp43, which acts as the Nucleophile.

Belongs to the pseudouridine synthase TruB family. Type 1 subfamily.

The catalysed reaction is uridine(55) in tRNA = pseudouridine(55) in tRNA. Responsible for synthesis of pseudouridine from uracil-55 in the psi GC loop of transfer RNAs. The polypeptide is tRNA pseudouridine synthase B (Bifidobacterium longum (strain NCC 2705)).